Here is a 553-residue protein sequence, read N- to C-terminus: Urocanate hydratase (553 aa).

NAD(+) is bound by residues 45-46 (GG), Gln-123, 169-171 (GMG), Asp-189, Arg-194, 235-236 (NA), 256-260 (QTSAH), 266-267 (YV), Tyr-315, and Gly-485.

The protein belongs to the urocanase family. Requires NAD(+) as cofactor.

Its subcellular location is the cytoplasm. The enzyme catalyses 4-imidazolone-5-propanoate = trans-urocanate + H2O. It participates in amino-acid degradation; L-histidine degradation into L-glutamate; N-formimidoyl-L-glutamate from L-histidine: step 2/3. Functionally, catalyzes the conversion of urocanate to 4-imidazolone-5-propionate. This Staphylococcus aureus (strain MRSA252) protein is Urocanate hydratase.